Reading from the N-terminus, the 211-residue chain is Adenylate kinase (211 aa).

10 to 15 (GSGKGT) is a binding site for ATP. Residues 30 to 59 (STGDMLRAEVSKKSPLGLKAEEYMKQGLLV) are NMP. Residues T31, R36, 57-59 (LLV), 84-87 (GFPR), and Q91 each bind AMP. The tract at residues 125–162 (GRRVCPKCGATYNIYYQKPKNDTLCDNDATPLIQRDDD) is LID. R126 is an ATP binding site. C129 and C132 together coordinate Zn(2+). 135–136 (TY) contacts ATP. The Zn(2+) site is built by C149 and D152. Residues R159 and R170 each coordinate AMP. Position 198 (G198) interacts with ATP.

This sequence belongs to the adenylate kinase family. As to quaternary structure, monomer.

The protein resides in the cytoplasm. It catalyses the reaction AMP + ATP = 2 ADP. It functions in the pathway purine metabolism; AMP biosynthesis via salvage pathway; AMP from ADP: step 1/1. Catalyzes the reversible transfer of the terminal phosphate group between ATP and AMP. Plays an important role in cellular energy homeostasis and in adenine nucleotide metabolism. The sequence is that of Adenylate kinase from Hydrogenobaculum sp. (strain Y04AAS1).